The sequence spans 246 residues: Phosphonates import ATP-binding protein PhnC (246 aa).

An ABC transporter domain is found at 2–246 (IKFENVSKIY…ILDEVYRKEA (245 aa)). 35–42 (GTSGAGKS) lines the ATP pocket.

It belongs to the ABC transporter superfamily. Phosphonates importer (TC 3.A.1.9.1) family. In terms of assembly, the complex is composed of two ATP-binding proteins (PhnC), two transmembrane proteins (PhnE) and a solute-binding protein (PhnD).

It is found in the cell membrane. The catalysed reaction is phosphonate(out) + ATP + H2O = phosphonate(in) + ADP + phosphate + H(+). Part of the ABC transporter complex PhnCDE involved in phosphonates import. Responsible for energy coupling to the transport system. This Lactococcus lactis subsp. lactis (strain IL1403) (Streptococcus lactis) protein is Phosphonates import ATP-binding protein PhnC.